The chain runs to 937 residues: Molybdenum cofactor sulfurase (937 aa).

Position 237 is an N6-(pyridoxal phosphate)lysine (Lys237). Residue Cys397 is part of the active site. Disordered stretches follow at residues 633–710 (GQGK…RRIL), 756–795 (PSPS…KLNP), and 897–921 (KEGT…GGNG). Positions 638–652 (MTRHAKAHLQRHQHQ) are enriched in basic residues. Residues 682 to 935 (TPPSPPDSDT…VRVGDVVRPS (254 aa)) enclose the MOSC domain. The span at 756-767 (PSPSTPSASPSN) shows a compositional bias: low complexity. A compositionally biased stretch (gly residues) spans 900–921 (TGMGMGTGTGTGTGTRSMGGNG).

It belongs to the class-V pyridoxal-phosphate-dependent aminotransferase family. MOCOS subfamily. The cofactor is pyridoxal 5'-phosphate.

The enzyme catalyses Mo-molybdopterin + L-cysteine + AH2 = thio-Mo-molybdopterin + L-alanine + A + H2O. It participates in cofactor biosynthesis; molybdopterin biosynthesis. In terms of biological role, sulfurates the molybdenum cofactor. Sulfation of molybdenum is essential for xanthine dehydrogenase (XDH) and aldehyde oxidase (ADO) enzymes in which molybdenum cofactor is liganded by 1 oxygen and 1 sulfur atom in active form. This Neurospora crassa (strain ATCC 24698 / 74-OR23-1A / CBS 708.71 / DSM 1257 / FGSC 987) protein is Molybdenum cofactor sulfurase (nit-13).